The primary structure comprises 447 residues: GTPase Der (447 aa).

EngA-type G domains follow at residues 3–167 and 180–353; these read PVIA…ALPE and IRLA…KSAN. Residues 9–16, 56–60, 119–122, 186–193, 233–237, and 298–301 each bind GTP; these read GRPNVGKS, DTGGF, NKAE, DTAGL, and NKWD. The KH-like domain occupies 354–438; that stretch reads RKMPTPVLTR…PLRIEMKTSS (85 aa).

The protein belongs to the TRAFAC class TrmE-Era-EngA-EngB-Septin-like GTPase superfamily. EngA (Der) GTPase family. Associates with the 50S ribosomal subunit.

Its function is as follows. GTPase that plays an essential role in the late steps of ribosome biogenesis. This chain is GTPase Der, found in Acidovorax sp. (strain JS42).